A 287-amino-acid polypeptide reads, in one-letter code: ATP synthase gamma chain (287 aa).

This sequence belongs to the ATPase gamma chain family. In terms of assembly, F-type ATPases have 2 components, CF(1) - the catalytic core - and CF(0) - the membrane proton channel. CF(1) has five subunits: alpha(3), beta(3), gamma(1), delta(1), epsilon(1). CF(0) has three main subunits: a, b and c.

The protein resides in the cell inner membrane. Functionally, produces ATP from ADP in the presence of a proton gradient across the membrane. The gamma chain is believed to be important in regulating ATPase activity and the flow of protons through the CF(0) complex. In Marinobacter nauticus (strain ATCC 700491 / DSM 11845 / VT8) (Marinobacter aquaeolei), this protein is ATP synthase gamma chain.